The following is a 567-amino-acid chain: DNA ligase B (567 aa).

K132 acts as the N6-AMP-lysine intermediate in catalysis.

Belongs to the NAD-dependent DNA ligase family. LigB subfamily.

It carries out the reaction NAD(+) + (deoxyribonucleotide)n-3'-hydroxyl + 5'-phospho-(deoxyribonucleotide)m = (deoxyribonucleotide)n+m + AMP + beta-nicotinamide D-nucleotide.. Its function is as follows. Catalyzes the formation of phosphodiester linkages between 5'-phosphoryl and 3'-hydroxyl groups in double-stranded DNA using NAD as a coenzyme and as the energy source for the reaction. This is DNA ligase B from Yersinia pestis bv. Antiqua (strain Angola).